A 431-amino-acid chain; its full sequence is Elongation factor 1-gamma (431 aa).

Residues V2 to G84 form the GST N-terminal domain. One can recognise a GST C-terminal domain in the interval C86–F212. The segment at K223–A261 is disordered. Low complexity predominate over residues A226–Q236. Over residues K237 to E254 the composition is skewed to basic and acidic residues. The region spanning S272–K431 is the EF-1-gamma C-terminal domain. Residue S294 is modified to Phosphoserine.

In terms of assembly, interacts with microtubules. May interact with BicDR; the interaction is probably indirect. Interacts (via C-terminus) with Doa; the interaction is probably direct, is transient and leads to phosphorylation of eEF1gamma by Doa. EF-1 is composed of four subunits: alpha, beta, delta, and gamma. Post-translationally, phosphorylated on Ser-294 by LAMMER kinases, including Doa. Phosphorylation on Ser-294 by Doa is required for negative regulation of microtubule-based transport.

Its subcellular location is the cytoplasm. The protein localises to the nucleus. It is found in the cytoskeleton. Its function is as follows. Microtubule binding protein involved in regulation of microtubule-based transport. Probably plays a role in anchoring the EF-1 complex to other cellular components. Probably involved in formation and/or development of mechanosensory organs during metamorphosis. Required for cellular and organismal viability. Not essential for the innate immune response to bacterial infection. The polypeptide is Elongation factor 1-gamma (Drosophila melanogaster (Fruit fly)).